Here is a 264-residue protein sequence, read N- to C-terminus: Thymidylate synthase (264 aa).

Arg-21 is a dUMP binding site. A (6R)-5,10-methylene-5,6,7,8-tetrahydrofolate-binding site is contributed by His-51. 126–127 (RR) lines the dUMP pocket. The Nucleophile role is filled by Cys-146. Residues 166 to 169 (RSAD), Asn-177, and 207 to 209 (HLY) contribute to the dUMP site. Position 169 (Asp-169) interacts with (6R)-5,10-methylene-5,6,7,8-tetrahydrofolate. Ser-263 lines the (6R)-5,10-methylene-5,6,7,8-tetrahydrofolate pocket.

It belongs to the thymidylate synthase family. Bacterial-type ThyA subfamily. Homodimer.

It is found in the cytoplasm. It carries out the reaction dUMP + (6R)-5,10-methylene-5,6,7,8-tetrahydrofolate = 7,8-dihydrofolate + dTMP. The protein operates within pyrimidine metabolism; dTTP biosynthesis. In terms of biological role, catalyzes the reductive methylation of 2'-deoxyuridine-5'-monophosphate (dUMP) to 2'-deoxythymidine-5'-monophosphate (dTMP) while utilizing 5,10-methylenetetrahydrofolate (mTHF) as the methyl donor and reductant in the reaction, yielding dihydrofolate (DHF) as a by-product. This enzymatic reaction provides an intracellular de novo source of dTMP, an essential precursor for DNA biosynthesis. This is Thymidylate synthase from Neisseria gonorrhoeae (strain ATCC 700825 / FA 1090).